A 358-amino-acid chain; its full sequence is MTTTIRSGRLSSWESFCNWVTSTNNRIYVGWFGVLMVPTLLAAAICFTIAFIAAPPVDIDGIREPVAGSFLYGNNIISGAVVPSSNAIGLHFYPIWEAASVDEWLYNGGPYQLVVFHFLIGICCWLGRQWELSYRLGMRPWICVAYSAPLSAAFAVFLIYPVGQGSFSDGMPLGISGTFNFMLVFQAEHNILMHPFHMIGVAGMFGGSLFSAMHGSLVTSSLIRETTETESQNYGYKFGQEEETYNIVAAHGYFGRLIFQYASFNNSRSLHFFLAAWPVICIWITSLGISTMAFNLNGFNFNQSVLDAQGRVVPTWADVLNRSNLGMEVMHERNAHNFPLDLAAAESTPVALIAPAIG.

3 helical membrane passes run tyrosine 28–isoleucine 45, histidine 117–leucine 132, and tryptophan 141–alanine 155. Histidine 117 lines the chlorophyll a pocket. Tryptophan 125 lines the pheophytin a pocket. Residues aspartate 169 and glutamate 188 each coordinate [CaMn4O5] cluster. Residues phenylalanine 196–leucine 217 form a helical membrane-spanning segment. Histidine 197 is a chlorophyll a binding site. Residues histidine 214 and serine 263 to phenylalanine 264 each bind a quinone. Histidine 214 is a binding site for Fe cation. Histidine 271 serves as a coordination point for Fe cation. A helical transmembrane segment spans residues phenylalanine 273–leucine 287. The [CaMn4O5] cluster site is built by histidine 331, glutamate 332, aspartate 341, and alanine 343. The propeptide occupies alanine 344–glycine 358.

This sequence belongs to the reaction center PufL/M/PsbA/D family. PSII is composed of 1 copy each of membrane proteins PsbA, PsbB, PsbC, PsbD, PsbE, PsbF, PsbH, PsbI, PsbJ, PsbK, PsbL, PsbM, PsbT, PsbX, PsbY, Psb30/Ycf12, peripheral proteins PsbO, CyanoQ (PsbQ), PsbU, PsbV and a large number of cofactors. It forms dimeric complexes. The D1/D2 heterodimer binds P680, chlorophylls that are the primary electron donor of PSII, and subsequent electron acceptors. It shares a non-heme iron and each subunit binds pheophytin, quinone, additional chlorophylls, carotenoids and lipids. D1 provides most of the ligands for the Mn4-Ca-O5 cluster of the oxygen-evolving complex (OEC). There is also a Cl(-1) ion associated with D1 and D2, which is required for oxygen evolution. The PSII complex binds additional chlorophylls, carotenoids and specific lipids. is required as a cofactor. In terms of processing, tyr-160 forms a radical intermediate that is referred to as redox-active TyrZ, YZ or Y-Z. Post-translationally, C-terminally processed by CtpA; processing is essential to allow assembly of the oxygen-evolving complex and thus photosynthetic growth.

The protein localises to the cellular thylakoid membrane. The catalysed reaction is 2 a plastoquinone + 4 hnu + 2 H2O = 2 a plastoquinol + O2. Its function is as follows. Photosystem II (PSII) is a light-driven water:plastoquinone oxidoreductase that uses light energy to abstract electrons from H(2)O, generating O(2) and a proton gradient subsequently used for ATP formation. It consists of a core antenna complex that captures photons, and an electron transfer chain that converts photonic excitation into a charge separation. The D1/D2 (PsbA/PsbD) reaction center heterodimer binds P680, the primary electron donor of PSII as well as several subsequent electron acceptors. The polypeptide is Photosystem II protein D1 (Prochlorococcus marinus (strain MIT 9303)).